The chain runs to 156 residues: Transcription elongation factor GreA (156 aa).

Positions 1–32 (MKKVRLTREGYEKLKKELEDLKRKFMYEISER) form a coiled coil.

Belongs to the GreA/GreB family.

Necessary for efficient RNA polymerase transcription elongation past template-encoded arresting sites. The arresting sites in DNA have the property of trapping a certain fraction of elongating RNA polymerases that pass through, resulting in locked ternary complexes. Cleavage of the nascent transcript by cleavage factors such as GreA or GreB allows the resumption of elongation from the new 3'terminus. GreA releases sequences of 2 to 3 nucleotides. The polypeptide is Transcription elongation factor GreA (Thermotoga petrophila (strain ATCC BAA-488 / DSM 13995 / JCM 10881 / RKU-1)).